The sequence spans 268 residues: MTDNILFAFALTLFAGLSTGVGSLIGLLSKEFNPKVLTISLGFSAGVMIYVAMIEIMVKARESLVVGIGAEMGKVVTVLSFFAGIFLIALIDKLIPSYENPHELNVAQKLEECSENQKKKLMRMGLFSAVAIGIHNFPEGLATFMSGLSNPTLGVSIAVAIAIHNIPEGLAVSAPIFYATQSRKKAFILSFLSGLAEPVGALIGYFLLRSFFSPSLFGVVFGAVAGIMVYISLDELLPAAEEYGEHHFAIGGVIAGMVVMAISLLLFT.

The next 8 membrane-spanning stretches (helical) occupy residues 5-25 (ILFAFALTLFAGLSTGVGSLI), 36-56 (VLTISLGFSAGVMIYVAMIEI), 75-95 (VVTVLSFFAGIFLIALIDKLI), 124-144 (MGLFSAVAIGIHNFPEGLATF), 157-177 (IAVAIAIHNIPEGLAVSAPIF), 187-207 (FILSFLSGLAEPVGALIGYFL), 211-231 (FFSPSLFGVVFGAVAGIMVYI), and 248-268 (FAIGGVIAGMVVMAISLLLFT). Fe(2+)-binding residues include asparagine 136 and glutamate 139. Zn(2+) is bound by residues glutamate 139 and histidine 164. Asparagine 165, glutamate 168, and glutamate 197 together coordinate Fe(2+). Residue glutamate 168 coordinates Zn(2+).

This sequence belongs to the ZIP transporter (TC 2.A.5) family. ZupT subfamily.

The protein resides in the cell membrane. The enzyme catalyses Zn(2+)(in) = Zn(2+)(out). Functionally, mediates zinc uptake. May also transport other divalent cations. The sequence is that of Zinc transporter ZupT from Chlorobium chlorochromatii (strain CaD3).